A 160-amino-acid polypeptide reads, in one-letter code: Cathelin-related peptide SC5 (160 aa).

Positions 1-29 (METQRASLSLGRCSLWLLLLGLALPSASA) are cleaved as a signal peptide. Positions 30-131 (QVLSYREAVL…DITCAEPQSV (102 aa)) are excised as a propeptide. Cystine bridges form between Cys86–Cys97 and Cys108–Cys125.

It belongs to the cathelicidin family.

The protein localises to the secreted. Its function is as follows. Broad spectrum bactericidal agent. The sequence is that of Cathelin-related peptide SC5 from Ovis aries (Sheep).